Here is a 1227-residue protein sequence, read N- to C-terminus: Splicing factor 3B subunit 3 (1227 aa).

Belongs to the RSE1 family. Identified in the spliceosome A complex; remains associated with the spliceosome throughout the splicing process. Component of the spliceosome B complex. Identified in the spliceosome C complex. Identified in the spliceosome E complex. Component of the U11/U12 snRNPs that are part of the U12-type spliceosome. Component of splicing factor SF3B complex. Identified in the SAGA transcription regulatory histone acetylation (HAT) complex; the interaction is RNA-independent.

The protein resides in the nucleus. Its function is as follows. Involved in pre-mRNA splicing as a component of the splicing factor SF3B complex, a constituent of the spliceosome. SF3B complex is required for 'A' complex assembly formed by the stable binding of U2 snRNP to the branchpoint sequence (BPS) in pre-mRNA. Sequence independent binding of SF3A/SF3B complex upstream of the branch site is essential, it may anchor U2 snRNP to the pre-mRNA. May also be involved in the assembly of the 'E' complex. Also belongs to the minor U12-dependent spliceosome, which is involved in the splicing of rare class of nuclear pre-mRNA intron. In Drosophila melanogaster (Fruit fly), this protein is Splicing factor 3B subunit 3.